The primary structure comprises 175 residues: Sec-independent protein translocase protein TatB (175 aa).

A helical membrane pass occupies residues Met-1–Gly-21. Disordered regions lie at residues Gly-104–Trp-132 and Ser-155–Phe-175.

Belongs to the TatB family. The Tat system comprises two distinct complexes: a TatABC complex, containing multiple copies of TatA, TatB and TatC subunits, and a separate TatA complex, containing only TatA subunits. Substrates initially bind to the TatABC complex, which probably triggers association of the separate TatA complex to form the active translocon.

The protein resides in the cell inner membrane. In terms of biological role, part of the twin-arginine translocation (Tat) system that transports large folded proteins containing a characteristic twin-arginine motif in their signal peptide across membranes. Together with TatC, TatB is part of a receptor directly interacting with Tat signal peptides. TatB may form an oligomeric binding site that transiently accommodates folded Tat precursor proteins before their translocation. The sequence is that of Sec-independent protein translocase protein TatB from Paraburkholderia xenovorans (strain LB400).